We begin with the raw amino-acid sequence, 342 residues long: Fatty acid desaturase 6 (342 aa).

2 helical membrane-spanning segments follow: residues 39-59 and 63-83; these read GVDCAILALSLLALPAGFLCL and NILAFATGITILGVCHYTLTV. Residues 87 to 91 carry the Histidine box-1 motif; sequence HLATH. Residues 100-120 form a helical membrane-spanning segment; that stretch reads WSKILMIFFLEVCTAFSAEFA. Residues 124 to 128 carry the Histidine box-2 motif; that stretch reads HVNLH. 2 helical membrane-spanning segments follow: residues 151–171 and 185–205; these read YVYMFLGPLLVPIITPLVALE and LGFICLGLYSQYWLFMNVSGF. The Histidine box-3 signature appears at 277–281; sequence HVEHH.

The protein belongs to the fatty acid desaturase type 1 family.

It localises to the membrane. Its pathway is lipid metabolism; fatty acid metabolism. The protein is Fatty acid desaturase 6 (Fads6) of Mus musculus (Mouse).